A 569-amino-acid chain; its full sequence is 3-oxosteroid 1-dehydrogenase (569 aa).

10 to 39 (DVVVVGSGAAGMVAALTAAHQGLSTVVVEK) serves as a coordination point for FAD. Positions 127 to 148 (PGGKPTGRSVEPKPFDANKLGP) are disordered.

It belongs to the FAD-dependent oxidoreductase 2 family. 3-oxosteroid dehydrogenase subfamily. FAD serves as cofactor.

The enzyme catalyses a 3-oxosteroid + A = a 3-oxo-Delta(1)-steroid + AH2. The catalysed reaction is a 3-oxo-Delta(4)-steroid + A = a 3-oxo-Delta(1,4)-steroid + AH2. In terms of biological role, catalyzes the elimination of the C-1 and C-2 hydrogen atoms of the A-ring from the polycyclic ring structure of 3-ketosteroids. Is also involved in the formation of 1,4-androstadiene-3,17-dione (ADD) from 4-androstene-3,17-dione (AD) to. The sequence is that of 3-oxosteroid 1-dehydrogenase (ksdD) from Mycolicibacterium smegmatis (strain ATCC 700084 / mc(2)155) (Mycobacterium smegmatis).